The chain runs to 567 residues: Sensor histidine kinase MtrB (567 aa).

Over residues 1–15 (MIFGSRRRIRGRRGR) the composition is skewed to basic residues. Residues 1–20 (MIFGSRRRIRGRRGRSGPMT) form a disordered region. 2 consecutive transmembrane segments (helical) span residues 42–62 (VVALTLGLSLAVILALGFVLT) and 213–233 (GTMATGGLVLLVLLAGIALLV). An HAMP domain is found at 235–287 (RQVVVPVRSASRIAERFAEGHLSERMPVRGEDDMARLAVSFNDMAESLSRQIA). Positions 302 to 519 (DVSHELRTPL…CFRLTLPMVR (218 aa)) constitute a Histidine kinase domain. His-305 bears the Phosphohistidine; by autocatalysis mark. The segment covering 529 to 551 (PMKPIPQPVLQPVAQPNPQPMPP) has biased composition (pro residues). Residues 529-567 (PMKPIPQPVLQPVAQPNPQPMPPEYKERQRPREHAEWSG) are disordered. Positions 552-567 (EYKERQRPREHAEWSG) are enriched in basic and acidic residues.

In terms of assembly, interacts with MrtA. Interacts with LpqB, probably extracytoplasmically via MtrB's sensor domain. Requires Mg(2+) as cofactor. It depends on Ca(2+) as a cofactor. The C-terminal domain (residues 234-567) autophosphorylates.

The protein localises to the cell membrane. It catalyses the reaction ATP + protein L-histidine = ADP + protein N-phospho-L-histidine.. Ca(2+) ions inhibit the phosphotransfer from MtrB to MtrA. Its function is as follows. Member of the two-component regulatory system MtrA/MtrB. Probably functions as a membrane-associated protein kinase that phosphorylates MtrA in response to environmental signals. Autophosphorylates and transfers phosphate to MtrA in vitro. Overexpression of MtrA alone decreases bacterial virulence in mouse infection; co-expression of MtrA and MtrB restores normal bacterial growth, suggesting that bacterial growth in macrophages requires an optimal ratio of MtrB to MtrA. Probably plays a role in cell division. In Mycobacterium tuberculosis (strain ATCC 25618 / H37Rv), this protein is Sensor histidine kinase MtrB (mtrB).